A 526-amino-acid polypeptide reads, in one-letter code: Peptide chain release factor 3 (526 aa).

The tr-type G domain maps to 8-277 (GKRRTFAIIS…GLTDWAPAPQ (270 aa)). Residues 17-24 (SHPDAGKT), 85-89 (DTPGH), and 139-142 (NKLD) contribute to the GTP site.

This sequence belongs to the TRAFAC class translation factor GTPase superfamily. Classic translation factor GTPase family. PrfC subfamily.

The protein resides in the cytoplasm. Functionally, increases the formation of ribosomal termination complexes and stimulates activities of RF-1 and RF-2. It binds guanine nucleotides and has strong preference for UGA stop codons. It may interact directly with the ribosome. The stimulation of RF-1 and RF-2 is significantly reduced by GTP and GDP, but not by GMP. This is Peptide chain release factor 3 from Aliivibrio fischeri (strain ATCC 700601 / ES114) (Vibrio fischeri).